The following is a 214-amino-acid chain: Pyrrolidone-carboxylate peptidase (214 aa).

Residues glutamate 79, cysteine 142, and histidine 166 contribute to the active site.

The protein belongs to the peptidase C15 family. In terms of assembly, homotetramer.

It localises to the cytoplasm. The enzyme catalyses Release of an N-terminal pyroglutamyl group from a polypeptide, the second amino acid generally not being Pro.. Removes 5-oxoproline from various penultimate amino acid residues except L-proline. This is Pyrrolidone-carboxylate peptidase from Fusobacterium nucleatum subsp. nucleatum (strain ATCC 25586 / DSM 15643 / BCRC 10681 / CIP 101130 / JCM 8532 / KCTC 2640 / LMG 13131 / VPI 4355).